A 201-amino-acid chain; its full sequence is Holliday junction resolvase RecU (201 aa).

Mg(2+) contacts are provided by Thr-85, Asp-87, Asp-100, and Gln-119.

Belongs to the RecU family. The cofactor is Mg(2+).

The protein localises to the cytoplasm. It carries out the reaction Endonucleolytic cleavage at a junction such as a reciprocal single-stranded crossover between two homologous DNA duplexes (Holliday junction).. Functionally, endonuclease that resolves Holliday junction intermediates in genetic recombination. Cleaves mobile four-strand junctions by introducing symmetrical nicks in paired strands. Promotes annealing of linear ssDNA with homologous dsDNA. Required for DNA repair, homologous recombination and chromosome segregation. This Pediococcus pentosaceus (strain ATCC 25745 / CCUG 21536 / LMG 10740 / 183-1w) protein is Holliday junction resolvase RecU.